Consider the following 395-residue polypeptide: Sensor protein DltS (395 aa).

Transmembrane regions (helical) follow at residues 9–29 and 136–156; these read FVFL…AVSN and FLIL…SLYL. Residues 177-387 enclose the Histidine kinase domain; it reads DASHELKTPI…RLEVQLPIDG (211 aa). H180 is modified (phosphohistidine; by autocatalysis).

The protein resides in the cell membrane. The catalysed reaction is ATP + protein L-histidine = ADP + protein N-phospho-L-histidine.. In terms of biological role, member of the two-component regulatory system DltS/DltR. Regulates the expression of the dlt operon. Probably phosphorylates DltR. The chain is Sensor protein DltS (dltS) from Streptococcus agalactiae serotype V (strain ATCC BAA-611 / 2603 V/R).